The chain runs to 542 residues: Membrane protein insertase YidC (542 aa).

The helical transmembrane segment at 6-26 (NILLIGLLFVSFLLWQQWQAD) threads the bilayer. Positions 32 to 41 (VAQTQSSVAP) are enriched in polar residues. Positions 32-57 (VAQTQSSVAPSTVADAHSSDVPDADS) are disordered. Helical transmembrane passes span 326 to 346 (LVVD…LLMF), 350 to 370 (FVGN…GMLY), 421 to 441 (GGCL…WVLL), 458 to 478 (LSVQ…MFIM), and 501 to 521 (VIFT…WLVG).

This sequence belongs to the OXA1/ALB3/YidC family. Type 1 subfamily. As to quaternary structure, interacts with the Sec translocase complex via SecD. Specifically interacts with transmembrane segments of nascent integral membrane proteins during membrane integration.

Its subcellular location is the cell inner membrane. In terms of biological role, required for the insertion and/or proper folding and/or complex formation of integral membrane proteins into the membrane. Involved in integration of membrane proteins that insert both dependently and independently of the Sec translocase complex, as well as at least some lipoproteins. Aids folding of multispanning membrane proteins. The chain is Membrane protein insertase YidC from Shewanella piezotolerans (strain WP3 / JCM 13877).